Reading from the N-terminus, the 415-residue chain is Adenosylhomocysteinase (415 aa).

Residues Thr53, Asp124, and Glu147 each coordinate substrate. Residue 148–150 (TTT) participates in NAD(+) binding. Substrate contacts are provided by Lys177 and Asp181. Residues Asn182, 211–216 (GYGWVG), Glu234, Asn269, 290–292 (SGH), and Asn337 contribute to the NAD(+) site.

This sequence belongs to the adenosylhomocysteinase family. It depends on NAD(+) as a cofactor.

The protein resides in the cytoplasm. The catalysed reaction is S-adenosyl-L-homocysteine + H2O = L-homocysteine + adenosine. Its pathway is amino-acid biosynthesis; L-homocysteine biosynthesis; L-homocysteine from S-adenosyl-L-homocysteine: step 1/1. Functionally, may play a key role in the regulation of the intracellular concentration of adenosylhomocysteine. The protein is Adenosylhomocysteinase of Sulfolobus acidocaldarius (strain ATCC 33909 / DSM 639 / JCM 8929 / NBRC 15157 / NCIMB 11770).